We begin with the raw amino-acid sequence, 399 residues long: Glutathione S-transferase LANCL1 (399 aa).

N-acetylalanine is present on Ala2. An N6-acetyllysine modification is found at Lys142. Residue Cys276 coordinates Zn(2+). Lys317 provides a ligand contact to glutathione. 2 residues coordinate Zn(2+): Cys322 and His323. 364-367 is a glutathione binding site; it reads RTPD.

The protein belongs to the LanC-like protein family. In terms of assembly, interacts with the C-terminal of STOM. Interacts with the EPS8 SH3 domain. Interaction with EPS8 is inhibited by glutathione binding. As to expression, expressed in brain.

It localises to the cytoplasm. It is found in the cell membrane. It catalyses the reaction RX + glutathione = an S-substituted glutathione + a halide anion + H(+). It carries out the reaction 1-chloro-2,4-dinitrobenzene + glutathione = 2,4-dinitrophenyl-S-glutathione + chloride + H(+). Functionally, functions as a glutathione transferase. Catalyzes conjugation of the glutathione (GSH) to artificial substrates 1-chloro-2,4-dinitrobenzene (CDNB) and p-nitrophenyl acetate. Mitigates neuronal oxidative stress during normal postnatal development and in response to oxidative stresses probably through GSH antioxidant defense mechanism. May play a role in EPS8 signaling. Binds glutathione. In Bos taurus (Bovine), this protein is Glutathione S-transferase LANCL1 (LANCL1).